A 428-amino-acid polypeptide reads, in one-letter code: E3 ubiquitin-protein ligase RNF128 (428 aa).

A signal peptide spans 1 to 38 (MGPPPGIGVYCRGGCGAARLLAWCFLLALSPHAPGSRG). 3 N-linked (GlcNAc...) asparagine glycosylation sites follow: Asn48, Asn59, and Asn101. The PA domain occupies 75 to 183 (SPLEPVSGVL…LKGTKILQSI (109 aa)). A helical transmembrane segment spans residues 208 to 228 (IFFVSVSFFIITAATVGYFIF). The RING-type; atypical zinc finger occupies 277 to 318 (CAVCIELYKPNDLVRILTCNHIFHKTCVDPWLLEHRTCPMCK). Residues 342 to 351 (VSNEASNTAS) show a composition bias toward polar residues. The tract at residues 342-428 (VSNEASNTAS…QEAAVREIKS (87 aa)) is disordered.

In terms of processing, auto-ubiquitinated. Controls the development of T-cell clonal anergy by ubiquitination. In terms of tissue distribution, expressed in brain, kidney, heart, liver, ovary, testis and thymus. Expression increased as early as 4 hours by 5- to 7-fold in anergized cultures as compared to resting or activated cells.

The protein localises to the cytoplasm. It localises to the endomembrane system. The protein resides in the cytoskeleton. It is found in the perinuclear region. The catalysed reaction is S-ubiquitinyl-[E2 ubiquitin-conjugating enzyme]-L-cysteine + [acceptor protein]-L-lysine = [E2 ubiquitin-conjugating enzyme]-L-cysteine + N(6)-ubiquitinyl-[acceptor protein]-L-lysine.. It functions in the pathway protein modification; protein ubiquitination. Its function is as follows. E3 ubiquitin-protein ligase that catalyzes 'Lys-27', 'Lys-48'- or 'Lys-63'-linked polyubiquitin chains formation and plays a role in different biological processes such as modulation of immune response, cytoskeletal dynamics or protein homeostasis. Inhibits IL2 and IL4 transcription, thereby playing an important role in the induction of the anergic phenotype, a long-term stable state of T-lymphocyte unresponsiveness to antigenic stimulation associated with the blockade of interleukin production. Ubiquitinates ARPC5 with 'Lys-48' linkages and COR1A with 'Lys-63' linkages leading to their degradation, down-regulation of these cytoskeletal components results in impaired lamellipodium formation and reduced accumulation of F-actin at the immunological synapse. Functions in the patterning of the dorsal ectoderm; sensitizes ectoderm to respond to neural-inducing signals. Plays a positive role in innate immune response by promoting 'Lys-63'-linked ubiquitination of TBK1 after RNA- or DNA-virus infection. Regulates alveolar macrophage activation and neutrophil infiltration by interacting with TLR4, targeting it for degradation, and inhibiting NF-kappa-B activation, hence decreasing pro-inflammatory cytokines. Negatively regulates the IL-3/STAT5 signaling pathway by facilitating 'Lys-27'-linked polyubiquitination of IL3RA leading to its degradation via lysosomal pathway. Directly regulates the N-glycosylation process in the endoplasmic reticulum by targeting the glycosyl-transferase RPN1 for ubiquitination and degradation. Other substrates targeted for degradation by RNF128 include transmembrane proteins CD40L, CD83 or the tetraspanin CD151. The chain is E3 ubiquitin-protein ligase RNF128 (Rnf128) from Mus musculus (Mouse).